The chain runs to 188 residues: Hypoxanthine/guanine phosphoribosyltransferase (188 aa).

It belongs to the purine/pyrimidine phosphoribosyltransferase family. Archaeal HPRT subfamily. As to quaternary structure, homodimer.

It localises to the cytoplasm. The catalysed reaction is IMP + diphosphate = hypoxanthine + 5-phospho-alpha-D-ribose 1-diphosphate. It catalyses the reaction GMP + diphosphate = guanine + 5-phospho-alpha-D-ribose 1-diphosphate. It functions in the pathway purine metabolism; IMP biosynthesis via salvage pathway; IMP from hypoxanthine: step 1/1. Functionally, catalyzes a salvage reaction resulting in the formation of IMP that is energically less costly than de novo synthesis. This is Hypoxanthine/guanine phosphoribosyltransferase from Methanobrevibacter ruminantium (strain ATCC 35063 / DSM 1093 / JCM 13430 / OCM 146 / M1) (Methanobacterium ruminantium).